Consider the following 177-residue polypeptide: tRNA (cytidine(56)-2'-O)-methyltransferase (177 aa).

S-adenosyl-L-methionine is bound by residues leucine 84 and 109–113 (GAEKV).

The protein belongs to the aTrm56 family. Homodimer.

The protein localises to the cytoplasm. The enzyme catalyses cytidine(56) in tRNA + S-adenosyl-L-methionine = 2'-O-methylcytidine(56) in tRNA + S-adenosyl-L-homocysteine + H(+). Specifically catalyzes the AdoMet-dependent 2'-O-ribose methylation of cytidine at position 56 in tRNAs. In Methanosarcina acetivorans (strain ATCC 35395 / DSM 2834 / JCM 12185 / C2A), this protein is tRNA (cytidine(56)-2'-O)-methyltransferase.